The chain runs to 234 residues: Sugar fermentation stimulation protein A (234 aa).

The segment at residues leucine 201–serine 220 is a DNA-binding region (H-T-H motif).

Belongs to the SfsA family.

Binds to DNA non-specifically. Could be a regulatory factor involved in maltose metabolism. In Salmonella agona (strain SL483), this protein is Sugar fermentation stimulation protein A.